Consider the following 281-residue polypeptide: Arabinose operon regulatory protein (281 aa).

Residues P8, T24, R38, Y82, and H93 each contribute to the alpha-L-arabinopyanose site. The HTH araC/xylS-type domain occupies 180–279 (RDACQYISDH…GASPSEFRAG (100 aa)). DNA-binding regions (H-T-H motif) lie at residues 198 to 219 (ASVA…RQQL) and 246 to 269 (IATV…KKCT).

In terms of assembly, homodimer.

The protein resides in the cytoplasm. Functionally, transcription factor that regulates the expression of several genes involved in the transport and metabolism of L-arabinose. In Salmonella typhimurium (strain LT2 / SGSC1412 / ATCC 700720), this protein is Arabinose operon regulatory protein.